Consider the following 72-residue polypeptide: Large ribosomal subunit protein uL29 (72 aa).

The protein belongs to the universal ribosomal protein uL29 family.

This Chlamydia abortus (strain DSM 27085 / S26/3) (Chlamydophila abortus) protein is Large ribosomal subunit protein uL29.